Consider the following 105-residue polypeptide: Nitrogen fixation nifHD1 region GlnB-like protein 1 (105 aa).

This sequence belongs to the P(II) protein family.

Functionally, could be involved in the regulation of nitrogen fixation. The sequence is that of Nitrogen fixation nifHD1 region GlnB-like protein 1 (glnBA) from Methanosarcina barkeri.